The following is a 202-amino-acid chain: Crossover junction endodeoxyribonuclease RuvC (202 aa).

Catalysis depends on residues Asp7, Glu68, and Asp141. Positions 7, 68, and 141 each coordinate Mg(2+).

This sequence belongs to the RuvC family. Homodimer which binds Holliday junction (HJ) DNA. The HJ becomes 2-fold symmetrical on binding to RuvC with unstacked arms; it has a different conformation from HJ DNA in complex with RuvA. In the full resolvosome a probable DNA-RuvA(4)-RuvB(12)-RuvC(2) complex forms which resolves the HJ. The cofactor is Mg(2+).

It localises to the cytoplasm. The catalysed reaction is Endonucleolytic cleavage at a junction such as a reciprocal single-stranded crossover between two homologous DNA duplexes (Holliday junction).. Functionally, the RuvA-RuvB-RuvC complex processes Holliday junction (HJ) DNA during genetic recombination and DNA repair. Endonuclease that resolves HJ intermediates. Cleaves cruciform DNA by making single-stranded nicks across the HJ at symmetrical positions within the homologous arms, yielding a 5'-phosphate and a 3'-hydroxyl group; requires a central core of homology in the junction. The consensus cleavage sequence is 5'-(A/T)TT(C/G)-3'. Cleavage occurs on the 3'-side of the TT dinucleotide at the point of strand exchange. HJ branch migration catalyzed by RuvA-RuvB allows RuvC to scan DNA until it finds its consensus sequence, where it cleaves and resolves the cruciform DNA. This chain is Crossover junction endodeoxyribonuclease RuvC, found in Clavibacter michiganensis subsp. michiganensis (strain NCPPB 382).